The chain runs to 877 residues: Alanine--tRNA ligase (877 aa).

Zn(2+)-binding residues include H562, H566, C664, and H668.

This sequence belongs to the class-II aminoacyl-tRNA synthetase family. Zn(2+) is required as a cofactor.

It localises to the cytoplasm. It carries out the reaction tRNA(Ala) + L-alanine + ATP = L-alanyl-tRNA(Ala) + AMP + diphosphate. Catalyzes the attachment of alanine to tRNA(Ala) in a two-step reaction: alanine is first activated by ATP to form Ala-AMP and then transferred to the acceptor end of tRNA(Ala). Also edits incorrectly charged Ser-tRNA(Ala) and Gly-tRNA(Ala) via its editing domain. The polypeptide is Alanine--tRNA ligase (Synechocystis sp. (strain ATCC 27184 / PCC 6803 / Kazusa)).